Here is a 208-residue protein sequence, read N- to C-terminus: Large ribosomal subunit protein uL4 (208 aa).

The segment at 45 to 89 (RQGTHAHKNRSAVSGGGKKPWRQKGTGRARQGSTRSPQWRGGGTV) is disordered.

This sequence belongs to the universal ribosomal protein uL4 family. Part of the 50S ribosomal subunit.

Its function is as follows. One of the primary rRNA binding proteins, this protein initially binds near the 5'-end of the 23S rRNA. It is important during the early stages of 50S assembly. It makes multiple contacts with different domains of the 23S rRNA in the assembled 50S subunit and ribosome. In terms of biological role, forms part of the polypeptide exit tunnel. In Lactococcus lactis subsp. cremoris (strain SK11), this protein is Large ribosomal subunit protein uL4.